A 149-amino-acid polypeptide reads, in one-letter code: Large ribosomal subunit protein uL15 (149 aa).

The segment at 8–49 (HDLRPAAGSNKPKTRVGRGEASKGKTAGRGTKGTGARKQVPA) is disordered. The segment covering 31 to 45 (GKTAGRGTKGTGARK) has biased composition (low complexity).

This sequence belongs to the universal ribosomal protein uL15 family. In terms of assembly, part of the 50S ribosomal subunit.

Functionally, binds to the 23S rRNA. This Corynebacterium aurimucosum (strain ATCC 700975 / DSM 44827 / CIP 107346 / CN-1) (Corynebacterium nigricans) protein is Large ribosomal subunit protein uL15.